Here is a 477-residue protein sequence, read N- to C-terminus: Bifunctional protein HldE (477 aa).

A ribokinase region spans residues 1–318; it reads MKVTLSEFER…ENAVRGRADT (318 aa). Lys-179 carries the post-translational modification N6-acetyllysine. 195-198 is an ATP binding site; the sequence is NLSE. Residue Asp-264 is part of the active site. The tract at residues 344 to 477 is cytidylyltransferase; that stretch reads MTNGVFDILH…IKKIQQDKKG (134 aa).

It in the N-terminal section; belongs to the carbohydrate kinase PfkB family. This sequence in the C-terminal section; belongs to the cytidylyltransferase family. As to quaternary structure, homodimer.

The catalysed reaction is D-glycero-beta-D-manno-heptose 7-phosphate + ATP = D-glycero-beta-D-manno-heptose 1,7-bisphosphate + ADP + H(+). It carries out the reaction D-glycero-beta-D-manno-heptose 1-phosphate + ATP + H(+) = ADP-D-glycero-beta-D-manno-heptose + diphosphate. It functions in the pathway nucleotide-sugar biosynthesis; ADP-L-glycero-beta-D-manno-heptose biosynthesis; ADP-L-glycero-beta-D-manno-heptose from D-glycero-beta-D-manno-heptose 7-phosphate: step 1/4. The protein operates within nucleotide-sugar biosynthesis; ADP-L-glycero-beta-D-manno-heptose biosynthesis; ADP-L-glycero-beta-D-manno-heptose from D-glycero-beta-D-manno-heptose 7-phosphate: step 3/4. Its function is as follows. Catalyzes the phosphorylation of D-glycero-D-manno-heptose 7-phosphate at the C-1 position to selectively form D-glycero-beta-D-manno-heptose-1,7-bisphosphate. In terms of biological role, catalyzes the ADP transfer from ATP to D-glycero-beta-D-manno-heptose 1-phosphate, yielding ADP-D-glycero-beta-D-manno-heptose. In Shigella boydii serotype 18 (strain CDC 3083-94 / BS512), this protein is Bifunctional protein HldE.